We begin with the raw amino-acid sequence, 162 residues long: Protein snakeskin (162 aa).

Topologically, residues 2-6 are cytoplasmic; sequence VSVET. The helical transmembrane segment at 7–27 threads the bilayer; the sequence is VGSIFIKALKLIINLVIIFLY. The Extracellular segment spans residues 28–53; that stretch reads RWGDGGEFLGIGGTWNLNEEKSADAE. Residues 54-74 traverse the membrane as a helical segment; it reads IVASGVMVGFLIYTGCHTIAF. Over 75–88 the chain is Cytoplasmic; it reads AFGTTKHKGELCDT. The helical transmembrane segment at 89-109 threads the bilayer; the sequence is IMNVVGCIMWIAVGGVALHYW. The Extracellular portion of the chain corresponds to 110-128; that stretch reads KGYMSDEGFLYVNSERQVG. The chain crosses the membrane as a helical span at residues 129 to 149; that stretch reads IAMGSLCVIEGALYLLDTVLA. At 150 to 162 the chain is on the cytoplasmic side; the sequence is CIHYSKGDTDYTQ.

As to quaternary structure, forms a complex with Tsp2A and mesh. Interacts with mesh; the interaction may be necessary for the localization of both proteins to the cell apicolateral region.

It localises to the apicolateral cell membrane. The protein resides in the cell junction. The protein localises to the septate junction. Its function is as follows. Required for assembly of smooth septate junctions (sSJs), together with mesh and Tsp2A. May be important for barrier function of the midgut epithelium. This Drosophila melanogaster (Fruit fly) protein is Protein snakeskin.